The following is a 64-amino-acid chain: Putative antitoxin VapB1 (64 aa).

Functionally, possibly the antitoxin component of a type II toxin-antitoxin (TA) system. Its cognate toxin is VapC1 (Potential). This chain is Putative antitoxin VapB1 (vapB1), found in Methanocaldococcus jannaschii (strain ATCC 43067 / DSM 2661 / JAL-1 / JCM 10045 / NBRC 100440) (Methanococcus jannaschii).